Consider the following 131-residue polypeptide: Methyl-coenzyme M reductase operon protein D (131 aa).

MCR is composed of three subunits: alpha, beta, and gamma. The function of proteins C and D is not known.

The protein is Methyl-coenzyme M reductase operon protein D (mcrD) of Methanothermus fervidus.